The sequence spans 936 residues: Myocardin-related transcription factor A (936 aa).

3 RPEL repeats span residues 15–40 (TVLQ…PPLK), 59–84 (DYLK…EETS), and 103–128 (DDLN…PVET). A Bipartite Nuclear localization signal motif is present at residues 62–100 (KRKIRSRPERAELVRMHILEETSAEPSLQAKQIKLKRAR). 3 disordered regions span residues 146–185 (SSFD…TQIP), 234–258 (SQPK…KVKK), and 401–422 (SQDP…QAKP). The span at 160–170 (QPASQESQGSI) shows a compositional bias: polar residues. The segment covering 239–254 (SFEKSQRIKKPKEPKP) has biased composition (basic and acidic residues). Positions 368–402 (LDEMKVAELKLELKHRGLPVSGTKIDLIERLKASQ) constitute an SAP domain. Over residues 404-416 (PSTATAASAKPTP) the composition is skewed to low complexity. The stretch at 497 to 542 (DARDKDLMLREKDRQIEELTQRLKQKQELVERLRQQLEQEKRTPQH) forms a coiled coil. Residues 707–755 (HNESPATPPQQPEPEPPPHSIFLTHSSPQWSKNPPGYDEAMKQQPNSCE) are disordered. The span at 712–725 (ATPPQQPEPEPPPH) shows a compositional bias: pro residues. A compositionally biased stretch (polar residues) spans 729–738 (LTHSSPQWSK).

In terms of assembly, interacts with srf, forming the srf-mrtfa nuclear complex which binds the 5'-CArG-3' consensus motif (CArG box) on DNA via srf. Interacts (via RPEL repeats) with globular actin (G-actin), thereby regulating its subcellular location and activity of the complex formed with srf.

It localises to the cytoplasm. It is found in the nucleus. Functionally, transcription coactivator that associates with the serum response factor (srf) transcription factor to control expression of genes regulating the cytoskeleton during development, morphogenesis and cell migration. The srf-mrtfa complex activity responds to Rho GTPase-induced changes in cellular globular actin (G-actin) concentration, thereby coupling cytoskeletal gene expression to cytoskeletal dynamics. Mrtfa binds G-actin via its RPEL repeats, regulating activity of the mrtfa-srf complex. Activity is also regulated by filamentous actin (F-actin) in the nucleus. The chain is Myocardin-related transcription factor A (mrtfa) from Xenopus laevis (African clawed frog).